The following is a 120-amino-acid chain: Large ribosomal subunit protein uL18 (120 aa).

The protein belongs to the universal ribosomal protein uL18 family. In terms of assembly, part of the 50S ribosomal subunit; part of the 5S rRNA/L5/L18/L25 subcomplex. Contacts the 5S and 23S rRNAs.

In terms of biological role, this is one of the proteins that bind and probably mediate the attachment of the 5S RNA into the large ribosomal subunit, where it forms part of the central protuberance. This Agrobacterium fabrum (strain C58 / ATCC 33970) (Agrobacterium tumefaciens (strain C58)) protein is Large ribosomal subunit protein uL18.